The following is a 180-amino-acid chain: Ribosome maturation factor RimM (180 aa).

In terms of domain architecture, PRC barrel spans 99–172 (EDEFYQVDLI…FLVVDPVAAG (74 aa)).

The protein belongs to the RimM family. As to quaternary structure, binds ribosomal protein uS19.

It localises to the cytoplasm. An accessory protein needed during the final step in the assembly of 30S ribosomal subunit, possibly for assembly of the head region. Essential for efficient processing of 16S rRNA. May be needed both before and after RbfA during the maturation of 16S rRNA. It has affinity for free ribosomal 30S subunits but not for 70S ribosomes. This Bartonella henselae (strain ATCC 49882 / DSM 28221 / CCUG 30454 / Houston 1) (Rochalimaea henselae) protein is Ribosome maturation factor RimM.